The following is a 471-amino-acid chain: Thiohydroximate-O-sulfate sulfur/sulfate-lyase (nitrile-forming) NSP2 (471 aa).

Residues 2-144 (VQKVEARGGE…LHSLGAYISS (143 aa)) enclose the Jacalin-type lectin domain. 6 Kelch repeats span residues 178 to 226 (KIFS…VRMV), 231 to 277 (SLYV…SMTA), 281 to 330 (NVYV…VVQG), 332 to 379 (VWVV…VVGK), 381 to 435 (ILVF…GWSA), and 446 to 471 (GLVM…VDSA). The active-site Proton donor is the arginine 238. A (Z)-N-(sulfonatooxy)alkanimidothioate-binding residues include arginine 238, serine 271, arginine 293, glycine 322, and valine 371. Arginine 293 functions as the Proton donor in the catalytic mechanism. Residues glutamate 387, aspartate 391, and histidine 395 each coordinate Fe(2+). A (Z)-N-(sulfonatooxy)alkanimidothioate is bound at residue tryptophan 433.

The protein belongs to the jacalin lectin family. Fe(2+) serves as cofactor. Expressed only in seeds.

The catalysed reaction is a (Z)-N-(sulfonatooxy)alkanimidothioate = a nitrile + sulfur + sulfate. The enzyme catalyses (Z)-phenyl-N-(sulfonatooxy)methanimidothioate = phenylacetonitrile + sulfur + sulfate. It catalyses the reaction (Z)-N-(sulfonatooxy)prop-2-enimidothioate = but-3-enenitrile + sulfur + sulfate. It carries out the reaction (Z)-(indol-3-yl)-N-(sulfonatooxy)methanimidothioate = (indol-3-yl)acetonitrile + sulfur + sulfate. The presence of Fe(2+) supports lyase activity in a dose-dependent manner with both benzylglucosinolate and 2-propenylglucosinolate as substrates. More active at pH 7.4 than at pH 6. Functionally, specifier protein responsible for constitutive and herbivore-induced simple nitrile formation, especially in seeds. Promotes simple nitriles, but not epithionitrile or thiocyanate formation. Converts allylglucosinolate (allyl-GSL), 2-propenylglucosinolate (sinigrin), indol-3-ylmethylglucosinolate (glucobrassicin), benzylisothiocyanate and benzylglucosinolate (glucotropaeolin) to their corresponding simple nitriles in the presence of myrosinase. Catalyzes mainly the conversion of benzylisothiocyanate when benzylglucosinolate is used as the initial substrate of myrosinase. Involved in the regulation of glucosinolate content in seeds, during stratification and germination. This chain is Thiohydroximate-O-sulfate sulfur/sulfate-lyase (nitrile-forming) NSP2, found in Arabidopsis thaliana (Mouse-ear cress).